A 224-amino-acid chain; its full sequence is 7-cyano-7-deazaguanine synthase (224 aa).

8 to 18 contributes to the ATP binding site; that stretch reads CSGGLDSTVAA. Residues cysteine 190, cysteine 198, cysteine 201, and cysteine 204 each coordinate Zn(2+).

Belongs to the QueC family. Zn(2+) serves as cofactor.

It carries out the reaction 7-carboxy-7-deazaguanine + NH4(+) + ATP = 7-cyano-7-deazaguanine + ADP + phosphate + H2O + H(+). It participates in purine metabolism; 7-cyano-7-deazaguanine biosynthesis. Functionally, catalyzes the ATP-dependent conversion of 7-carboxy-7-deazaguanine (CDG) to 7-cyano-7-deazaguanine (preQ(0)). This is 7-cyano-7-deazaguanine synthase from Methanothrix thermoacetophila (strain DSM 6194 / JCM 14653 / NBRC 101360 / PT) (Methanosaeta thermophila).